The chain runs to 997 residues: Malignant fibrous histiocytoma-amplified sequence 1 homolog (997 aa).

14 LRR repeats span residues 32–53, 54–76, 79–100, 102–123, 125–146, 148–170, 171–192, 194–216, 218–239, 241–262, 264–286, 287–308, 310–331, and 333–354; these read SLRQ…ADLG, DVEV…QSLS, NLHV…VYHL, RLTE…VGLL, KLKK…LGML, DLEE…QGLP, SLRT…LFHV, ALEE…IRSM, SLKI…ICEL, NLES…FGAL, KLKM…LQLV, DLEE…ISCM, KLVT…IVEL, and FLEE…FGKL. The Roc domain occupies 393–626; the sequence is QPAVKPRLKL…EKLLSVAEHR (234 aa). Residues 637–861 enclose the COR domain; sequence PKSWQMLEEL…RFSVQINSHI (225 aa).

Its subcellular location is the cytoplasm. In terms of biological role, probable GTP-binding protein. Functions in innate immunity and more specifically the inflammatory response as a regulator of the Toll-like receptor TLR2 and TLR4 signaling pathways. This is Malignant fibrous histiocytoma-amplified sequence 1 homolog (mfhas1) from Xenopus tropicalis (Western clawed frog).